The sequence spans 330 residues: Phosphate acyltransferase (330 aa).

Belongs to the PlsX family. In terms of assembly, homodimer. Probably interacts with PlsY.

The protein resides in the cytoplasm. The enzyme catalyses a fatty acyl-[ACP] + phosphate = an acyl phosphate + holo-[ACP]. It functions in the pathway lipid metabolism; phospholipid metabolism. In terms of biological role, catalyzes the reversible formation of acyl-phosphate (acyl-PO(4)) from acyl-[acyl-carrier-protein] (acyl-ACP). This enzyme utilizes acyl-ACP as fatty acyl donor, but not acyl-CoA. The chain is Phosphate acyltransferase from Streptococcus pneumoniae (strain 70585).